The primary structure comprises 357 residues: Dual-specificity RNA methyltransferase RlmN (357 aa).

Catalysis depends on glutamate 89, which acts as the Proton acceptor. Positions 109-340 constitute a Radical SAM core domain; it reads EGEKYTVCVS…CTIRESKALD (232 aa). A disulfide bridge connects residues cysteine 116 and cysteine 345. Positions 123, 127, and 130 each coordinate [4Fe-4S] cluster. S-adenosyl-L-methionine is bound by residues 173-174, serine 203, 226-228, and asparagine 302; these read GE and SLH. Cysteine 345 acts as the S-methylcysteine intermediate in catalysis.

This sequence belongs to the radical SAM superfamily. RlmN family. Requires [4Fe-4S] cluster as cofactor.

Its subcellular location is the cytoplasm. It catalyses the reaction adenosine(2503) in 23S rRNA + 2 reduced [2Fe-2S]-[ferredoxin] + 2 S-adenosyl-L-methionine = 2-methyladenosine(2503) in 23S rRNA + 5'-deoxyadenosine + L-methionine + 2 oxidized [2Fe-2S]-[ferredoxin] + S-adenosyl-L-homocysteine. The enzyme catalyses adenosine(37) in tRNA + 2 reduced [2Fe-2S]-[ferredoxin] + 2 S-adenosyl-L-methionine = 2-methyladenosine(37) in tRNA + 5'-deoxyadenosine + L-methionine + 2 oxidized [2Fe-2S]-[ferredoxin] + S-adenosyl-L-homocysteine. Functionally, specifically methylates position 2 of adenine 2503 in 23S rRNA and position 2 of adenine 37 in tRNAs. m2A2503 modification seems to play a crucial role in the proofreading step occurring at the peptidyl transferase center and thus would serve to optimize ribosomal fidelity. This Helicobacter pylori (strain P12) protein is Dual-specificity RNA methyltransferase RlmN.